We begin with the raw amino-acid sequence, 95 residues long: Aspartyl/glutamyl-tRNA(Asn/Gln) amidotransferase subunit C (95 aa).

Belongs to the GatC family. In terms of assembly, heterotrimer of A, B and C subunits.

The catalysed reaction is L-glutamyl-tRNA(Gln) + L-glutamine + ATP + H2O = L-glutaminyl-tRNA(Gln) + L-glutamate + ADP + phosphate + H(+). The enzyme catalyses L-aspartyl-tRNA(Asn) + L-glutamine + ATP + H2O = L-asparaginyl-tRNA(Asn) + L-glutamate + ADP + phosphate + 2 H(+). Allows the formation of correctly charged Asn-tRNA(Asn) or Gln-tRNA(Gln) through the transamidation of misacylated Asp-tRNA(Asn) or Glu-tRNA(Gln) in organisms which lack either or both of asparaginyl-tRNA or glutaminyl-tRNA synthetases. The reaction takes place in the presence of glutamine and ATP through an activated phospho-Asp-tRNA(Asn) or phospho-Glu-tRNA(Gln). The chain is Aspartyl/glutamyl-tRNA(Asn/Gln) amidotransferase subunit C from Gluconobacter oxydans (strain 621H) (Gluconobacter suboxydans).